The following is a 369-amino-acid chain: Ribosomal RNA large subunit methyltransferase M (369 aa).

S-adenosyl-L-methionine contacts are provided by residues S198, 231 to 234 (APGG), D250, D270, and D287. The active-site Proton acceptor is K316.

This sequence belongs to the class I-like SAM-binding methyltransferase superfamily. RNA methyltransferase RlmE family. RlmM subfamily. As to quaternary structure, monomer.

Its subcellular location is the cytoplasm. The catalysed reaction is cytidine(2498) in 23S rRNA + S-adenosyl-L-methionine = 2'-O-methylcytidine(2498) in 23S rRNA + S-adenosyl-L-homocysteine + H(+). In terms of biological role, catalyzes the 2'-O-methylation at nucleotide C2498 in 23S rRNA. The chain is Ribosomal RNA large subunit methyltransferase M from Idiomarina loihiensis (strain ATCC BAA-735 / DSM 15497 / L2-TR).